The primary structure comprises 215 residues: Adenylate kinase (215 aa).

Position 10 to 15 (10 to 15) interacts with ATP; it reads GAGKGT. Residues 30–59 are NMP; sequence STGDMLRAAIKAGTPLGLEAKKIIDEGGLV. AMP contacts are provided by residues T31, R36, 57–59, 85–88, and Q92; these read GLV and GFPR. The LID stretch occupies residues 122–159; it reads GRRVHLASGRTYHVTYNPPKTEGKDDVTGEDLIQRDDD. ATP-binding positions include R123 and 132-133; that span reads TY. AMP is bound by residues R156 and R167. ATP is bound at residue Q200.

This sequence belongs to the adenylate kinase family. In terms of assembly, monomer.

Its subcellular location is the cytoplasm. It carries out the reaction AMP + ATP = 2 ADP. It functions in the pathway purine metabolism; AMP biosynthesis via salvage pathway; AMP from ADP: step 1/1. In terms of biological role, catalyzes the reversible transfer of the terminal phosphate group between ATP and AMP. Plays an important role in cellular energy homeostasis and in adenine nucleotide metabolism. In Neisseria gonorrhoeae (strain ATCC 700825 / FA 1090), this protein is Adenylate kinase.